We begin with the raw amino-acid sequence, 685 residues long: tRNA-dihydrouridine(47) synthase [NAD(P)(+)]-like (685 aa).

The segment covering 1-12 (MAATAAAAAAAP) has biased composition (low complexity). Disordered stretches follow at residues 1 to 91 (MAAT…SSSH), 209 to 234 (AANDDKKVNHDNLDGNDDENKEPLCN), and 257 to 314 (LIDN…SCRT). Pro residues predominate over residues 13 to 29 (PADPPDSSPAASSPPRP). The C3H1-type zinc finger occupies 87 to 118 (KSSSHLCIEVGKSGNVSSCKYGDSCRFSHDID). Basic and acidic residues-rich tracts occupy residues 209–221 (AANDDKKVNHDNL) and 273–284 (SKVESDEIDKHG). A compositionally biased stretch (polar residues) spans 287–314 (TLNTNTESEDPNLSNGLEPSNNSSSCRT). FMN is bound by residues 338–340 (PLT) and glutamine 392. The Proton donor role is filled by cysteine 423. Residues lysine 462, histidine 492, 525–527 (NGD), and 550–551 (AR) each bind FMN.

Belongs to the Dus family. Dus3 subfamily. It depends on FMN as a cofactor.

It catalyses the reaction 5,6-dihydrouridine(47) in tRNA + NAD(+) = uridine(47) in tRNA + NADH + H(+). The catalysed reaction is 5,6-dihydrouridine(47) in tRNA + NADP(+) = uridine(47) in tRNA + NADPH + H(+). The enzyme catalyses a 5,6-dihydrouridine in mRNA + NAD(+) = a uridine in mRNA + NADH + H(+). It carries out the reaction a 5,6-dihydrouridine in mRNA + NADP(+) = a uridine in mRNA + NADPH + H(+). Catalyzes the synthesis of dihydrouridine, a modified base found in the D-loop of most tRNAs. Specifically modifies U47 in cytoplasmic tRNAs. Catalyzes the synthesis of dihydrouridine in some mRNAs, thereby affecting their translation. The protein is tRNA-dihydrouridine(47) synthase [NAD(P)(+)]-like of Oryza sativa subsp. japonica (Rice).